Here is a 382-residue protein sequence, read N- to C-terminus: 1-deoxy-D-xylulose 5-phosphate reductoisomerase (382 aa).

Residues T10, G11, S12, I13, N38, and N120 each coordinate NADPH. K121 lines the 1-deoxy-D-xylulose 5-phosphate pocket. E122 contributes to the NADPH binding site. D146 provides a ligand contact to Mn(2+). 1-deoxy-D-xylulose 5-phosphate-binding residues include S147, E148, S172, and H195. Residue E148 participates in Mn(2+) binding. G201 serves as a coordination point for NADPH. 1-deoxy-D-xylulose 5-phosphate is bound by residues S208, N213, K214, and E217. E217 provides a ligand contact to Mn(2+).

The protein belongs to the DXR family. Requires Mg(2+) as cofactor. Mn(2+) serves as cofactor.

The catalysed reaction is 2-C-methyl-D-erythritol 4-phosphate + NADP(+) = 1-deoxy-D-xylulose 5-phosphate + NADPH + H(+). The protein operates within isoprenoid biosynthesis; isopentenyl diphosphate biosynthesis via DXP pathway; isopentenyl diphosphate from 1-deoxy-D-xylulose 5-phosphate: step 1/6. Functionally, catalyzes the NADPH-dependent rearrangement and reduction of 1-deoxy-D-xylulose-5-phosphate (DXP) to 2-C-methyl-D-erythritol 4-phosphate (MEP). In Thermoanaerobacter sp. (strain X514), this protein is 1-deoxy-D-xylulose 5-phosphate reductoisomerase.